The sequence spans 485 residues: NADH-quinone oxidoreductase subunit N (485 aa).

The next 14 membrane-spanning stretches (helical) occupy residues 8-28 (LIALLPLLIVGLTVVVVMLSI), 35-55 (FLNATLSVVGLNAALLSLWFV), 75-95 (LYTGLVLLASLATCTFAYPWL), 105-125 (FYLLVLIAALGGILLANANHL), 127-147 (SLFLGIELISLPLFGLVGYAF), 159-179 (YTILSAAASSFLLFGMALVYA), 203-223 (LLAGLGLMIVGLGFKLSLVPF), 235-255 (PAPVSTFLATASKIAIFGVVM), 271-291 (VVLGVLAFASILFGNLMALTQ), 297-317 (LLGYSSISHLGYLLVALIALK), 326-346 (VGVYLAGYLFSSLGAFGVVSL), 374-394 (AVMTVMMLSLAGIPMTLGFIG), 408-427 (WWLTGAVVVGSAIGLYYYLR), and 455-475 (VVVLISALLVLVLGVWPQPLI).

This sequence belongs to the complex I subunit 2 family. As to quaternary structure, NDH-1 is composed of 13 different subunits. Subunits NuoA, H, J, K, L, M, N constitute the membrane sector of the complex.

Its subcellular location is the cell inner membrane. The enzyme catalyses a quinone + NADH + 5 H(+)(in) = a quinol + NAD(+) + 4 H(+)(out). Its function is as follows. NDH-1 shuttles electrons from NADH, via FMN and iron-sulfur (Fe-S) centers, to quinones in the respiratory chain. The immediate electron acceptor for the enzyme in this species is believed to be ubiquinone. Couples the redox reaction to proton translocation (for every two electrons transferred, four hydrogen ions are translocated across the cytoplasmic membrane), and thus conserves the redox energy in a proton gradient. In Cronobacter sakazakii (strain ATCC BAA-894) (Enterobacter sakazakii), this protein is NADH-quinone oxidoreductase subunit N.